The following is a 422-amino-acid chain: UDP-N-acetylglucosamine 1-carboxyvinyltransferase (422 aa).

22 to 23 serves as a coordination point for phosphoenolpyruvate; it reads KN. R92 serves as a coordination point for UDP-N-acetyl-alpha-D-glucosamine. The active-site Proton donor is C116. C116 carries the post-translational modification 2-(S-cysteinyl)pyruvic acid O-phosphothioketal. Positions 306 and 328 each coordinate UDP-N-acetyl-alpha-D-glucosamine.

Belongs to the EPSP synthase family. MurA subfamily.

The protein resides in the cytoplasm. The enzyme catalyses phosphoenolpyruvate + UDP-N-acetyl-alpha-D-glucosamine = UDP-N-acetyl-3-O-(1-carboxyvinyl)-alpha-D-glucosamine + phosphate. It participates in cell wall biogenesis; peptidoglycan biosynthesis. Cell wall formation. Adds enolpyruvyl to UDP-N-acetylglucosamine. The sequence is that of UDP-N-acetylglucosamine 1-carboxyvinyltransferase from Elusimicrobium minutum (strain Pei191).